Reading from the N-terminus, the 230-residue chain is MKIGIIGAMEPEVAILREQISNMETLSIAGCEFYRGELAGHDVILTRSGIGKVAASIATTILLDRYAPDCVINTGSAGGFDPELRVGDVVISDEVRHHDVNVTAFGYEPGQLPQQPAAFISDSKLIEVATQVMHQLPELQSRIGLICTGDQFMCDPDHIEQVRQTFPAMMAAEMEAAAIAQVCHQFKVPFVVIRSLSDIAGTESPSTFEEYLEVAAKNSSAMIVAMLKQL.

The Proton acceptor role is filled by glutamate 12. Residues glycine 78, methionine 153, and 174-175 (ME) contribute to the substrate site. Aspartate 198 (proton donor) is an active-site residue.

This sequence belongs to the PNP/UDP phosphorylase family. MtnN subfamily.

It catalyses the reaction S-adenosyl-L-homocysteine + H2O = S-(5-deoxy-D-ribos-5-yl)-L-homocysteine + adenine. The catalysed reaction is S-methyl-5'-thioadenosine + H2O = 5-(methylsulfanyl)-D-ribose + adenine. It carries out the reaction 5'-deoxyadenosine + H2O = 5-deoxy-D-ribose + adenine. The protein operates within amino-acid biosynthesis; L-methionine biosynthesis via salvage pathway; S-methyl-5-thio-alpha-D-ribose 1-phosphate from S-methyl-5'-thioadenosine (hydrolase route): step 1/2. Functionally, catalyzes the irreversible cleavage of the glycosidic bond in both 5'-methylthioadenosine (MTA) and S-adenosylhomocysteine (SAH/AdoHcy) to adenine and the corresponding thioribose, 5'-methylthioribose and S-ribosylhomocysteine, respectively. Also cleaves 5'-deoxyadenosine, a toxic by-product of radical S-adenosylmethionine (SAM) enzymes, into 5-deoxyribose and adenine. The protein is 5'-methylthioadenosine/S-adenosylhomocysteine nucleosidase of Tolumonas auensis (strain DSM 9187 / NBRC 110442 / TA 4).